Consider the following 376-residue polypeptide: MGTQGKVIRCKATVLWKPGAPLAIEEIEVAPPKAKEVRIKMVATGVCGTDIKHLDTQELSKFCPMIMGHEGVGIVESVGEGVSSVRTGDKVILLCIPQCGECKTCLNSKNNICTEIRLSKTHLASEGTSRITCKGKLVHQYIALGSFSEYTVLKEISVAKIDEGAPLEKVCIIGCGFATGYGAAINSAKVTPGSTCAVFGLGGVGLSVIIGCKAAGAARIIAVDINKDRFAKAKTVGATDCVDPRDFEKPIEEVLSDMIDGGVDFCFEVTGNTEAVGAALGSCHKDHGVCVTVGALASFTSTLSIRSHLFFSGRILKGSILGGWKTKEEIPKLVSDYMAKKFNIDPLITHTLTLSEANEAVQLMKSGQCIRCVLLL.

The Zn(2+) site is built by Cys-47, His-69, Cys-99, Cys-102, Cys-105, Cys-113, and Cys-175. Residues 200–205, Asp-224, Arg-229, 293–295, and Arg-371 contribute to the NAD(+) site; these read GLGGVG and VGA.

This sequence belongs to the zinc-containing alcohol dehydrogenase family. Class-V subfamily. As to quaternary structure, dimer. Zn(2+) serves as cofactor.

The protein resides in the cytoplasm. It carries out the reaction a primary alcohol + NAD(+) = an aldehyde + NADH + H(+). It catalyses the reaction a secondary alcohol + NAD(+) = a ketone + NADH + H(+). Functionally, alcohol dehydrogenase. Catalyzes the NAD-dependent oxidation of primary alcohols to the corresponding aldehydes. Oxidizes secondary alcohols to the corresponding ketones. The chain is Alcohol dehydrogenase 6 (Adh6) from Rattus norvegicus (Rat).